The chain runs to 216 residues: Large ribosomal subunit protein uL3 (216 aa).

A disordered region spans residues glycine 137–proline 158.

The protein belongs to the universal ribosomal protein uL3 family. Part of the 50S ribosomal subunit. Forms a cluster with proteins L14 and L19.

Its function is as follows. One of the primary rRNA binding proteins, it binds directly near the 3'-end of the 23S rRNA, where it nucleates assembly of the 50S subunit. This Pseudarthrobacter chlorophenolicus (strain ATCC 700700 / DSM 12829 / CIP 107037 / JCM 12360 / KCTC 9906 / NCIMB 13794 / A6) (Arthrobacter chlorophenolicus) protein is Large ribosomal subunit protein uL3.